The sequence spans 381 residues: Cytochrome b (381 aa).

4 helical membrane passes run 33–53, 77–98, 113–133, and 178–198; these read FGSL…FLAM, WLLR…FLHV, WNIG…GYVL, and FFAF…VHLL. Positions 83 and 97 each coordinate heme b. Heme b is bound by residues His182 and His196. His201 contributes to the a ubiquinone binding site. A run of 4 helical transmembrane segments spans residues 226–246, 288–308, 320–340, and 347–367; these read IKDA…GLFS, LGGV…PLLH, IFQT…WIGG, and FIII…ALMP.

Belongs to the cytochrome b family. In terms of assembly, the cytochrome bc1 complex contains 11 subunits: 3 respiratory subunits (MT-CYB, CYC1 and UQCRFS1), 2 core proteins (UQCRC1 and UQCRC2) and 6 low-molecular weight proteins (UQCRH/QCR6, UQCRB/QCR7, UQCRQ/QCR8, UQCR10/QCR9, UQCR11/QCR10 and a cleavage product of UQCRFS1). This cytochrome bc1 complex then forms a dimer. Heme b serves as cofactor.

It localises to the mitochondrion inner membrane. Functionally, component of the ubiquinol-cytochrome c reductase complex (complex III or cytochrome b-c1 complex) that is part of the mitochondrial respiratory chain. The b-c1 complex mediates electron transfer from ubiquinol to cytochrome c. Contributes to the generation of a proton gradient across the mitochondrial membrane that is then used for ATP synthesis. This chain is Cytochrome b (MT-CYB), found in Dasykaluta rosamondae (Little red marsupial mouse).